The primary structure comprises 2726 residues: MMNNSNYSDASGLGLLDEADEMPSTEKDLAEDAPWKKIQQNTFTRWCNEHLKCVGKRLTDLQRDLSDGLRLIALLEVLSQKRMYRKFHPRPNFRQMKLENVSVALEFLEREHIKLVSIDSKAIVDGNLKLILGLIWTLILHYSISMPMWEDEDDEDARKQTPKQRLLGWIQNKVPQLPITNFNRDWQDGKALGALVDNCAPGLCPDWEAWDPNQPVQNAREAMQQADDWLGVPQVIAPEEIVDPNVDEHSVMTYLSQFPKAKLKPGAPVRSKQLNPKKAIAYGPGIEPQGNTVLQPAHFTVQTVDAGVGEVLVYIEDPEGHTEEAKVVPNNDKDRTYAVSYVPKVAGLHKVTVLFAGQNIERSPFEVNVGMALGDANKVSARGPGLEPVGNVANKPTYFDIYTAGAGTGDVAVVIVDPQGRRDTVEVALEDKGDNTFRCTYRPVMEGPHTVHVAFAGAPITRSPFPVHVAEACNPNACRASGRGLQPKGVRVKEVADFKVFTKGAGSGELKVTVKGPKGTEEPVKVREAGDGVFECEYYPVIPGKYVVTITWGGYAIPRSPFEVQVSPEAGAQKVRAWGPGLETGQVGKSADFVVEAIGTEVGTLGFSIEGPSQAKIECDDRGDGSCDVRYWPTEPGEYAVHVICDDEDIRDSPFIAHIQPAPPDCFPDKVKAFGPGLEPTGCIVDRPAEFTIDARAAGKGDLKLYAQDADGCPIDIKVIPNGDGTFRCSYVPTKPIKHTVIISWGGVNVPKSPFRVNVGEGSHPERVKVYGPGVEKTGLKANEPTYFTVDCSEAGQGDVSIGIKCAPGVVGPAEADIDFDIIKNDNDTFTVKYTPPGAGHYTIMVLFANQEIPASPFHIKVDPSHDASKVKAEGPGLSRTGVEVGKPTHFTVLTKGAGKAKLDVHFAGAAKGEAVRDFEIIDNHDYSYTVKYTAVQQGNMAVTVTYGGDPVPKSPFVVNVAPPLDLSKVKVQGLNSKVAVGEEQAFLVNTRGAGGQGQLDVRMTSPSRRPIPCKLEPGSGAEAQAVRYMPPEEGPYKVDITYDGHPVPGSPFAVEGVLPPDPSKVCAYGPGLKGGLVGTPAPFSIDTKGAGTGGLGLTVEGPCEAKIECQDNGDGSCAVSYLPTEPGEYTINILFAEAHIPGSPFKATIQPVFDPSKVRASGPGLERGKAGEAATFTVDCSEAGEAELTIEILSDAGVKAEVLIHNNADGTYHITYSPAFPGTYTITIKYGGHPIPKFPTRVHVQPAVDTSGIKVSGPGVEPHGVLREVTTEFTVDARSLTATGGNHVTARVLNPSGAKTDTYVTDNGDGTYRVQYTAYEEGVHLVEVLYDEVAVPKSPFRVGVTEGCDPTRVRAFGPGLEGGLVNKANRFTVETRGAGTGGLGLAIEGPSEAKMSCKDNKDGSCTVEYVPFTPGDYDVNITFGGQPIPGSPFRVPVKDVVDPGKVKCSGPGLGTGVRARVPQTFTVDCSQAGRAPLQVAVLGPTGVAEPVEVRDNGDGTHTVHYTPATDGPYTVAVKYADQEVPRSPFKIKVLPAHDASKVRASGPGLNASGIPASLPVEFTIDARDAGEGLLTVQILDPEGKPKKANIRDNGDGTYTVSYLPDMSGRYTITIKYGGDEIPYSPFRIHALPTGDASKCLVTVSIGGHGLGACLGPRIQIGEETVITVDAKAAGKGKVTCTVSTPDGAELDVDVVENHDGTFDIYYTAPEPGKYVITIRFGGEHIPNSPFHVLACDPLPHVEEPAEVLQLHQPYAPLRPGTCPTHWATEEPVVPVEPLESMLRPFNLVIPFTVQKGELTGEVRMPSGKTARPNITDNKDGTITVRYAPTEKGLHQMGIKYDGNHIPGSPLQFYVDAINSGHVSAYGPGLSHGMVNKPATFTIVTKDAGEGGLSLAVEGPSKAEITCKDNKDGTCTVSYLPTAPGDYSIIVRFDDKHIPGSPFTAKITGDDSMRTSQLNVGTSTDVSLKITEGDLSQLTASIRAPSGNEEPCLLKRLPNRHIGISFTPKEVGEHVVSVRKSGKHVTNSPFKILVGPSEIGDASKVRVWGKGLSEGQTFQVAEFIVDTRNAGYGGLGLSIEGPSKVDINCEDMEDGTCKVTYCPTEPGTYIINIKFADKHVPGSPFTVKVTGEGRMKESITRRRQAPSIATIGSTCDLNLKIPGNWFQMVSAQERLTRTFTRSSHTYTRTERTEISKTRGGETKREVRVEESTQVGGDPFPAVFGDFLGRERLGSFGSITRQQEGEASSQDMTAQVTSPSGKTEAAEIVEGEDSAYSVRFVPQEMGPHTVAVKYRGQHVPGSPFQFTVGPLGEGGAHKVRAGGTGLERGVAGVPAEFSIWTREAGAGGLSIAVEGPSKAEIAFEDRKDGSCGVSYVVQEPGDYEVSIKFNDEHIPDSPFVVPVASLSDDARRLTVTSLQETGLKVNQPASFAVQLNGARGVIDARVHTPSGAVEECYVSELDSDKHTIRFIPHENGVHSIDVKFNGAHIPGSPFKIRVGEQSQAGDPGLVSAYGPGLEGGTTGVSSEFIVNTQNAGSGALSVTIDGPSKVQLDCRECPEGHVVTYTPMAPGNYLIAIKYGGPQHIVGSPFKAKVTGPRLSGGHSLHETSTVLVETVTKSSSSRGASYSSIPKFSSDASKVVTRGPGLSQAFVGQKNSFTVDCSKAGTNMMMVGVHGPKTPCEEVYVKHMGNRVYNVTYTVKEKGDYILIVKWGDESVPGSPFKVNVP.

Positions Met1 to Lys260 are actin-binding. Residue Ser5 is modified to Phosphoserine. 2 consecutive Calponin-homology (CH) domains span residues Lys37 to Ser143 and Gln160 to Leu263. Filamin repeat units follow at residues Ser271–Val369, Met371–Val469, Ala470–Val566, Ser567–Ile659, Pro663–Val759, Gly760–Val862, Asp863–Val961, Ala962–Gly1057, Val1058–Ile1150, Gln1151–Val1245, Gln1246–Val1345, Thr1346–Val1438, Lys1439–Val1534, Leu1535–Ala1631, and Asp1636–Ala1735. Arg1003 is modified (omega-N-methylarginine). Phosphoserine is present on residues Ser1162 and Ser1339. The tract at residues Cys1736–Arg1759 is hinge 1. 4 Filamin repeats span residues Pro1760–Tyr1854, Val1855–Ile1947, Thr1948–Val2034, and Ser2037–Val2129. Ser2043 is modified (phosphoserine). The intradomain insert; mediate targeting to Z lines stretch occupies residues Gly2163 to Gly2244. The span at Ile2194–Glu2210 shows a compositional bias: basic and acidic residues. The disordered stretch occupies residues Ile2194 to Val2214. A phosphoserine mark is found at Ser2234 and Ser2237. At Thr2239 the chain carries Phosphothreonine. Polar residues predominate over residues Gln2241 to Gly2260. The segment at Gln2241–Lys2261 is disordered. Residues Glu2245–Val2307 form a Filamin 20; mediates interaction with XIRP1 repeat. 3 Filamin repeats span residues Leu2310–Val2402, Ser2404–Val2497, and Ser2501–Val2593. The segment at Ser2404–Val2725 is interaction with INPPL1. Residues Ser2587, Ser2618, Ser2621, Ser2633, Ser2715, and Ser2719 each carry the phosphoserine modification. A hinge 2 region spans residues Thr2594 to Pro2630. The interval Thr2594–Pro2726 is self-association site, tail. Residues Lys2631–Val2725 form a Filamin 24 repeat.

The protein belongs to the filamin family. As to quaternary structure, homodimer; the filamin repeat 24 and the second hinge domain are important for dimer formation. Interacts with FLNB, KCND2, INPPL1, ITGB1A, MYOT, MYOZ1 and MYOZ3. Interacts with sarcoglycans SGCD and SGCG. Interacts (via filament repeats 17-18, 20-21 and 24) with USP25 (isoform USP25m only). Interacts with FBLIM1. Interacts with KY. Interacts with IGFN1. Interacts with MICALL2. Interacts with XIRP1; this interaction is mediated by filamin 20 repeat. Interacts with ANK3. Interacts with SYNPO2. Ubiquitinated by FBXL22, leading to proteasomal degradation.

The protein localises to the cytoplasm. Its subcellular location is the membrane. It is found in the cytoskeleton. The protein resides in the myofibril. It localises to the sarcomere. The protein localises to the z line. Muscle-specific filamin, which plays a central role in sarcomere assembly and organization. Critical for normal myogenesis, it probably functions as a large actin-cross-linking protein with structural functions at the Z lines in muscle cells. May be involved in reorganizing the actin cytoskeleton in response to signaling events. The protein is Filamin-C (Flnc) of Rattus norvegicus (Rat).